The primary structure comprises 181 residues: Large ribosomal subunit protein uL5 (181 aa).

This sequence belongs to the universal ribosomal protein uL5 family. In terms of assembly, part of the 50S ribosomal subunit; part of the 5S rRNA/L5/L18/L25 subcomplex. Contacts the 5S rRNA and the P site tRNA. Forms a bridge to the 30S subunit in the 70S ribosome.

Its function is as follows. This is one of the proteins that bind and probably mediate the attachment of the 5S RNA into the large ribosomal subunit, where it forms part of the central protuberance. In the 70S ribosome it contacts protein S13 of the 30S subunit (bridge B1b), connecting the 2 subunits; this bridge is implicated in subunit movement. Contacts the P site tRNA; the 5S rRNA and some of its associated proteins might help stabilize positioning of ribosome-bound tRNAs. The protein is Large ribosomal subunit protein uL5 of Helicobacter acinonychis (strain Sheeba).